The sequence spans 479 residues: Ribulose bisphosphate carboxylase large chain (479 aa).

The propeptide occupies 1–2; that stretch reads MS. Positions 123 and 173 each coordinate substrate. Lys-175 acts as the Proton acceptor in catalysis. Residue Lys-177 participates in substrate binding. Mg(2+)-binding residues include Lys-201, Asp-203, and Glu-204. N6-carboxylysine is present on Lys-201. Residue Ser-208 is modified to Phosphoserine. Catalysis depends on His-294, which acts as the Proton acceptor. Substrate-binding residues include Arg-295 and His-327. Thr-330 is subject to Phosphothreonine. Ser-379 is a substrate binding site.

This sequence belongs to the RuBisCO large chain family. Type I subfamily. In terms of assembly, heterohexadecamer of 8 large chains and 8 small chains; disulfide-linked. The disulfide link is formed within the large subunit homodimers. Mg(2+) is required as a cofactor. Post-translationally, the disulfide bond which can form in the large chain dimeric partners within the hexadecamer appears to be associated with oxidative stress and protein turnover.

Its subcellular location is the plastid. It is found in the chloroplast. The catalysed reaction is 2 (2R)-3-phosphoglycerate + 2 H(+) = D-ribulose 1,5-bisphosphate + CO2 + H2O. It catalyses the reaction D-ribulose 1,5-bisphosphate + O2 = 2-phosphoglycolate + (2R)-3-phosphoglycerate + 2 H(+). Functionally, ruBisCO catalyzes two reactions: the carboxylation of D-ribulose 1,5-bisphosphate, the primary event in carbon dioxide fixation, as well as the oxidative fragmentation of the pentose substrate in the photorespiration process. Both reactions occur simultaneously and in competition at the same active site. This is Ribulose bisphosphate carboxylase large chain from Nasturtium officinale (Watercress).